A 275-amino-acid polypeptide reads, in one-letter code: Arylamine N-acetyltransferase (275 aa).

Cys-70 acts as the Acyl-thioester intermediate in catalysis. Active-site residues include His-110 and Asp-127.

This sequence belongs to the arylamine N-acetyltransferase family. As to quaternary structure, homodimer and homotetramer.

The catalysed reaction is an arylamine + acetyl-CoA = an N-acetylarylamine + CoA. Catalyzes the transfer of the acetyl group from acetyl coenzyme A to the free amino group of arylamines and hydrazines. Substrates include isoniazid, anisidine, and 4-aminoveratrole, and to a much lesser extent, p-aminobenzoic acid. This chain is Arylamine N-acetyltransferase, found in Mycolicibacterium smegmatis (Mycobacterium smegmatis).